The sequence spans 1088 residues: Ran-binding protein 17 (1088 aa).

At Ala2 the chain carries N-acetylalanine. Residue Ser569 is modified to Phosphoserine.

It belongs to the exportin family. In terms of assembly, binds to nucleoporins and the GTP-bound form of Ran. In terms of tissue distribution, highly expressed in primary spermatocytes and very weakly in pancreas.

The protein resides in the cytoplasm. It is found in the nucleus. The protein localises to the nuclear pore complex. Its function is as follows. May function as a nuclear transport receptor. In Mus musculus (Mouse), this protein is Ran-binding protein 17 (Ranbp17).